The chain runs to 235 residues: TIR domain-containing adapter molecule 2 (235 aa).

The tract at residues 1–39 (MGIGKSKINSCPLSLSWGKRHSVDTSPGYHESDSKKSED) is disordered. A lipid anchor (N-myristoyl glycine) is attached at Gly-2. At Ser-16 the chain carries Phosphoserine; by PKC/PRKCE. A compositionally biased stretch (basic and acidic residues) spans 30-39 (HESDSKKSED). Residues 73–229 (AEEEVFLKFV…TIWKETRNMV (157 aa)) enclose the TIR domain. At Tyr-167 the chain carries Phosphotyrosine.

As to quaternary structure, homodimer. Interacts with TLR4, TICAM1, IRF3 and IRF7 in response to LPS. Interacts with IL1R1, IL1RAP, IRAK2, IRAK3 and TRAF6. Interacts with protein kinase-inactive mutants of IRAK1 and IRAK4. Isoform 1 interacts with isoform 2; the interaction occurs in late endosomes and disrupts the interaction between isoform 1 and TICAM1. Interacts with MYD88; the interaction decreases after IL-18 stimulation in a time-dependent manner. Interacts with IL18R1 and IL18RAP. Interacts with TLR2. Interacts with RAB11FIP2. Phosphorylated by PRKCE in response to LPS. Phosphorylation is essential for its function. It is depleted from the membrane upon phosphorylation. Tyrosine phosphorylation is inhibited by phosphatase PTPN4. Post-translationally, isoform 1 is myristoylated. Required for membrane association which is critical for its ability to initiate efficient signaling. As to expression, expressed in spleen, prostate, testis, uterus, small intestine, colon, peripheral blood leukocytes, heart, placenta, lung, liver, skeletal muscle, and pancreas Isoform 2 is ubiquitously expressed (at lower levels than isoform 1).

The protein localises to the cytoplasm. It is found in the golgi apparatus. The protein resides in the cell membrane. It localises to the endoplasmic reticulum. Its subcellular location is the early endosome membrane. The protein localises to the late endosome membrane. It is found in the cell projection. The protein resides in the phagocytic cup. Its function is as follows. Functions as a sorting adapter in different signaling pathways to facilitate downstream signaling leading to type I interferon induction. In TLR4 signaling, physically bridges TLR4 and TICAM1 and functionally transmits signal to TICAM1 in early endosomes after endocytosis of TLR4. In TLR2 signaling, physically bridges TLR2 and MYD88 and is required for the TLR2-dependent movement of MYD88 to endosomes following ligand engagement. Involved in IL-18 signaling and is proposed to function as a sorting adapter for MYD88 in IL-18 signaling during adaptive immune response. Forms a complex with RAB11FIP2 that is recruited to the phagosomes to promote the activation of the actin-regulatory GTPases RAC1 and CDC42 and subsequent phagocytosis of Gram-negative bacteria. Proposed to inhibit LPS-TLR4 signaling at the late endosome by interaction with isoform 1 thereby disrupting the association of isoform 1 with TICAM1. May be involved in TLR4 degradation in late endosomes. The sequence is that of TIR domain-containing adapter molecule 2 (TICAM2) from Homo sapiens (Human).